The sequence spans 139 residues: Large ribosomal subunit protein uL16 (139 aa).

This sequence belongs to the universal ribosomal protein uL16 family. In terms of assembly, part of the 50S ribosomal subunit.

Binds 23S rRNA and is also seen to make contacts with the A and possibly P site tRNAs. The chain is Large ribosomal subunit protein uL16 from Protochlamydia amoebophila (strain UWE25).